A 187-amino-acid polypeptide reads, in one-letter code: Threonylcarbamoyl-AMP synthase (187 aa).

A YrdC-like domain is found at glutamine 3–glycine 187.

Belongs to the SUA5 family. TsaC subfamily.

The protein localises to the cytoplasm. The enzyme catalyses L-threonine + hydrogencarbonate + ATP = L-threonylcarbamoyladenylate + diphosphate + H2O. Required for the formation of a threonylcarbamoyl group on adenosine at position 37 (t(6)A37) in tRNAs that read codons beginning with adenine. Catalyzes the conversion of L-threonine, HCO(3)(-)/CO(2) and ATP to give threonylcarbamoyl-AMP (TC-AMP) as the acyladenylate intermediate, with the release of diphosphate. The sequence is that of Threonylcarbamoyl-AMP synthase from Shewanella pealeana (strain ATCC 700345 / ANG-SQ1).